The following is a 747-amino-acid chain: Polyribonucleotide nucleotidyltransferase (747 aa).

The Mg(2+) site is built by Asp-487 and Asp-493. Residues 554–613 form the KH domain; sequence PSTTTIKIDKDKIRDIIGPGGKIIKEICETSGAKIDISDDGTVSVYAADRDKLKIASDKI. The 69-residue stretch at 623-691 folds into the S1 motif domain; that stretch reads GEIFNGTVTK…NKGKAKLTIK (69 aa). Positions 694-716 are disordered; it reads DKDKSLNNPKPQNSINNAKENSE. Residues 699 to 712 show a composition bias toward polar residues; it reads LNNPKPQNSINNAK.

The protein belongs to the polyribonucleotide nucleotidyltransferase family. The cofactor is Mg(2+).

The protein resides in the cytoplasm. The enzyme catalyses RNA(n+1) + phosphate = RNA(n) + a ribonucleoside 5'-diphosphate. Functionally, involved in mRNA degradation. Catalyzes the phosphorolysis of single-stranded polyribonucleotides processively in the 3'- to 5'-direction. The polypeptide is Polyribonucleotide nucleotidyltransferase (Rickettsia canadensis (strain McKiel)).